Here is a 256-residue protein sequence, read N- to C-terminus: uncharacterized protein (256 aa).

A run of 2 helical transmembrane segments spans residues 155–175 (ITGM…GLWL) and 203–223 (ITTT…YLLI).

It is found in the cell membrane. This is an uncharacterized protein from Mycobacterium bovis (strain ATCC BAA-935 / AF2122/97).